Reading from the N-terminus, the 919-residue chain is Leucine--tRNA ligase (919 aa).

A 'HIGH' region motif is present at residues 83–93; the sequence is PYPSGKLHMGH. The 'KMSKS' region signature appears at 670 to 674; the sequence is KMSKS. Residue lysine 673 participates in ATP binding.

Belongs to the class-I aminoacyl-tRNA synthetase family.

The protein localises to the cytoplasm. It carries out the reaction tRNA(Leu) + L-leucine + ATP = L-leucyl-tRNA(Leu) + AMP + diphosphate. In Psychrobacter cryohalolentis (strain ATCC BAA-1226 / DSM 17306 / VKM B-2378 / K5), this protein is Leucine--tRNA ligase.